We begin with the raw amino-acid sequence, 379 residues long: MGYARKVGWVTAGLVIGAGACYCIYRLTRGRKQNKEKMAEGGSGDVDDAGDCSGARYNDWSDDDDDSNESKSIVWYPPWARIGTEAGTRARARARARATRARRAVQKRASPNSDDTVLSPQELQKVLCLVEMSEKPYILEAALIALGNNAAYAFNRDIIRDLGGLPIVAKILNTRDPIVKEKALIVLNNLSVNAENQRRLKVYMNQVCDDTITSRLNSSVQLAGLRLLTNMTVTNEYQHMLANSISDFFRLFSAGNEETKLQVLKLLLNLAENPAMTRELLRAQVPSSLGSLFNKKENKEVILKLLVIFENINDNFKWEENEPTQNQFGEGSLFFFLKEFQVCADKVLGIESHHDFLVKVKVGKFMAKLAEHMFPKSQE.

The Mitochondrial intermembrane portion of the chain corresponds to 1 to 6 (MGYARK). Mitochondrion outer membrane (MOM)-targeting sequence regions lie at residues 1-6 (MGYARK) and 26-37 (RLTRGRKQNKEK). The chain crosses the membrane as a helical; Signal-anchor span at residues 7-29 (VGWVTAGLVIGAGACYCIYRLTR). At 30 to 379 (GRKQNKEKMA…AEHMFPKSQE (350 aa)) the chain is on the cytoplasmic side. Phosphoserine occurs at positions 61, 67, and 72. Residues 89-98 (RARARARARA) are nuclear localization signal. The span at 95-106 (RARATRARRAVQ) shows a compositional bias: basic residues. The disordered stretch occupies residues 95 to 116 (RARATRARRAVQKRASPNSDDT). S110 is subject to Phosphoserine. ARM repeat units lie at residues 111 to 151 (PNSD…NNAA), 153 to 192 (AFNRDIIRDLGGLPIVAKILNTRDPIVKEKALIVLNNLSV), and 233 to 272 (VTNEYQHMLANSISDFFRLFSAGNEETKLQVLKLLLNLAE).

It belongs to the eutherian X-chromosome-specific Armcx family. In terms of assembly, interacts (via ARM domain) with MIRO1, MIRO2 and TRAK2. The interaction with Miro is calcium-dependent. Interacts with SOX10.

Its subcellular location is the mitochondrion outer membrane. It localises to the cytoplasm. The protein localises to the nucleus. Regulates mitochondrial aggregation and transport in axons in living neurons. May link mitochondria to the TRAK2-kinesin motor complex via its interaction with Miro and TRAK2. Mitochondrial distribution and dynamics is regulated through ARMCX3 protein degradation, which is promoted by PCK and negatively regulated by WNT1. Enhances the SOX10-mediated transactivation of the neuronal acetylcholine receptor subunit alpha-3 and beta-4 subunit gene promoters. The chain is Armadillo repeat-containing X-linked protein 3 (ARMCX3) from Homo sapiens (Human).